The primary structure comprises 1230 residues: ATP-dependent helicase/nuclease subunit A (1230 aa).

The 477-residue stretch at 4–480 (RNWTGPQEAA…IDLSHNFRSR (477 aa)) folds into the UvrD-like helicase ATP-binding domain. An ATP-binding site is contributed by 25-32 (AGAGSGKT). The region spanning 517–799 (AQLEGSGPPV…RIMSIHQAKG (283 aa)) is the UvrD-like helicase C-terminal domain. The disordered stretch occupies residues 535-554 (TSVGRDTAGTADDEPDRSDE). The span at 545–554 (ADDEPDRSDE) shows a compositional bias: acidic residues.

This sequence belongs to the helicase family. AddA subfamily. As to quaternary structure, heterodimer of AddA and AddB/RexB. Requires Mg(2+) as cofactor.

It catalyses the reaction Couples ATP hydrolysis with the unwinding of duplex DNA by translocating in the 3'-5' direction.. The catalysed reaction is ATP + H2O = ADP + phosphate + H(+). Functionally, the heterodimer acts as both an ATP-dependent DNA helicase and an ATP-dependent, dual-direction single-stranded exonuclease. Recognizes the chi site generating a DNA molecule suitable for the initiation of homologous recombination. The AddA nuclease domain is required for chi fragment generation; this subunit has the helicase and 3' -&gt; 5' nuclease activities. The sequence is that of ATP-dependent helicase/nuclease subunit A from Desulforudis audaxviator (strain MP104C).